The chain runs to 205 residues: Disintegrin-like leberagin-C (205 aa).

In terms of domain architecture, Disintegrin spans 4–90 (PPVCGNELLE…DCPIDRFHRN (87 aa)). 9 disulfides stabilise this stretch: Cys7–Cys26, Cys18–Cys36, Cys62–Cys82, Cys69–Cys94, Cys101–Cys106, Cys113–Cys128, Cys151–Cys158, Cys163–Cys171, and Cys193–Cys198. A D/ECD-tripeptide motif is present at residues 68–70 (ECD). The N-linked (GlcNAc...) asparagine glycan is linked to Asn120.

It belongs to the venom metalloproteinase (M12B) family. P-III subfamily. P-IIIb sub-subfamily. In terms of assembly, monomer. In terms of tissue distribution, expressed by the venom gland.

The protein resides in the secreted. Inhibits platelet aggregation induced by thrombin and arachidonic acid with IC(50) of 40 and 50 nM respectively (in rabbit platetelet-rich plasma). It also inhibits the adhesion of melanoma tumor cells on fibrinogen and fibronectin, by interfering with the function of alpha-V/beta-3 (ITGAV/ITGB3) and, to a lesser extent, with alpha-V/beta-6 (ITGAV/ITGB6) and alpha-5/beta-1 (ITGA5/ITGB1) integrins. This is Disintegrin-like leberagin-C from Macrovipera lebetina transmediterranea (Blunt-nosed viper).